A 235-amino-acid polypeptide reads, in one-letter code: Cell division protein FtsQ (235 aa).

Residues 1-6 lie on the Cytoplasmic side of the membrane; the sequence is MERLTR. The helical transmembrane segment at 7 to 25 threads the bilayer; it reads WLLVMMAMLLAASGLVWFY. Residues 26–235 are Periplasmic-facing; it reads NSNHLPVKQV…DGLPEKESEE (210 aa). Residues 30 to 99 enclose the POTRA domain; the sequence is LPVKQVSLKG…DTVEVVLTER (70 aa).

Belongs to the FtsQ/DivIB family. FtsQ subfamily. In terms of assembly, part of a complex composed of FtsB, FtsL and FtsQ.

It localises to the cell inner membrane. Essential cell division protein. May link together the upstream cell division proteins, which are predominantly cytoplasmic, with the downstream cell division proteins, which are predominantly periplasmic. May control correct divisome assembly. The polypeptide is Cell division protein FtsQ (Neisseria meningitidis serogroup B (strain ATCC BAA-335 / MC58)).